Consider the following 252-residue polypeptide: 5-oxoprolinase subunit A (252 aa).

Belongs to the LamB/PxpA family. In terms of assembly, forms a complex composed of PxpA, PxpB and PxpC.

It carries out the reaction 5-oxo-L-proline + ATP + 2 H2O = L-glutamate + ADP + phosphate + H(+). Functionally, catalyzes the cleavage of 5-oxoproline to form L-glutamate coupled to the hydrolysis of ATP to ADP and inorganic phosphate. The sequence is that of 5-oxoprolinase subunit A from Chloroflexus aggregans (strain MD-66 / DSM 9485).